The chain runs to 232 residues: Phosphatidylserine decarboxylase proenzyme (232 aa).

The Schiff-base intermediate with substrate; via pyruvic acid role is filled by S190. S190 is subject to Pyruvic acid (Ser); by autocatalysis.

This sequence belongs to the phosphatidylserine decarboxylase family. PSD-A subfamily. In terms of assembly, heterodimer of a large membrane-associated beta subunit and a small pyruvoyl-containing alpha subunit. The cofactor is pyruvate. In terms of processing, is synthesized initially as an inactive proenzyme. Formation of the active enzyme involves a self-maturation process in which the active site pyruvoyl group is generated from an internal serine residue via an autocatalytic post-translational modification. Two non-identical subunits are generated from the proenzyme in this reaction, and the pyruvate is formed at the N-terminus of the alpha chain, which is derived from the carboxyl end of the proenzyme. The post-translation cleavage follows an unusual pathway, termed non-hydrolytic serinolysis, in which the side chain hydroxyl group of the serine supplies its oxygen atom to form the C-terminus of the beta chain, while the remainder of the serine residue undergoes an oxidative deamination to produce ammonia and the pyruvoyl prosthetic group on the alpha chain.

It localises to the cell membrane. It catalyses the reaction a 1,2-diacyl-sn-glycero-3-phospho-L-serine + H(+) = a 1,2-diacyl-sn-glycero-3-phosphoethanolamine + CO2. The protein operates within phospholipid metabolism; phosphatidylethanolamine biosynthesis; phosphatidylethanolamine from CDP-diacylglycerol: step 2/2. Catalyzes the formation of phosphatidylethanolamine (PtdEtn) from phosphatidylserine (PtdSer). This is Phosphatidylserine decarboxylase proenzyme from Sinorhizobium medicae (strain WSM419) (Ensifer medicae).